The sequence spans 382 residues: Sialidase (382 aa).

A substrate-binding site is contributed by Arg37. Asp62 acts as the Proton acceptor in catalysis. BNR repeat units lie at residues 71-82 (ARSTDFGKTWSY), 140-151 (IYSDDNGLTWSN), and 208-219 (IYSKDNGETWTM). Residue Arg245 participates in substrate binding. The stretch at 255-266 (YISHDLGTTWEI) is one BNR 4 repeat. Tyr347 serves as the catalytic Nucleophile.

The protein belongs to the glycosyl hydrolase 33 family.

The protein localises to the secreted. The catalysed reaction is Hydrolysis of alpha-(2-&gt;3)-, alpha-(2-&gt;6)-, alpha-(2-&gt;8)- glycosidic linkages of terminal sialic acid residues in oligosaccharides, glycoproteins, glycolipids, colominic acid and synthetic substrates.. Functionally, sialidases have been suggested to be pathogenic factors in microbial infections. This Clostridium perfringens protein is Sialidase (nanH).